The primary structure comprises 518 residues: Cytokinin hydroxylase (518 aa).

The helical transmembrane segment at 1–21 (MLLTILKSLLVIFVTTILRVL) threads the bilayer. C464 lines the heme pocket.

This sequence belongs to the cytochrome P450 family. It depends on heme as a cofactor. In terms of tissue distribution, expressed in roots and flowers.

It localises to the membrane. The catalysed reaction is N(6)-(dimethylallyl)adenosine 5'-phosphate + NADPH + O2 + H(+) = 9-ribosyl-trans-zeatin 5'-phosphate + NADP(+) + H2O. It carries out the reaction N(6)-(dimethylallyl)adenosine 5'-diphosphate + NADPH + O2 + H(+) = 9-ribosyl-trans-zeatin 5'-diphosphate + NADP(+) + H2O. The enzyme catalyses N(6)-(dimethylallyl)adenosine 5'-triphosphate + NADPH + O2 + H(+) = 9-ribosyl-trans-zeatin 5'-triphosphate + NADP(+) + H2O. Cytokinin hydroxylase that catalyzes the biosynthesis of trans-zeatin via the isopentenyladenine riboside 5'-monophosphate (iPRMP)-dependent pathway. Can use isopentenyladenosine-5'-monophosphate, isopentenyladenosine-5'-diphosphate and isopentenyladenosine-5'-triphosphate as substrate. The polypeptide is Cytokinin hydroxylase (CYP735A1) (Arabidopsis thaliana (Mouse-ear cress)).